Here is a 428-residue protein sequence, read N- to C-terminus: Leucine-rich repeat-containing protein 42 (428 aa).

LRR repeat units lie at residues 149–170 (VLCS…EEIK), 174–195 (ELTC…LEHL), 202–222 (SVTQ…RKMT), 234–255 (NLTL…GYLF), and 259–280 (KLNC…KHKL). The interval 379–412 (KHEAISSQESKKSKKRPFEESETEQNNSSQPSKQ) is disordered. Phosphoserine occurs at positions 406 and 407.

The protein belongs to the LRRC42 family.

The polypeptide is Leucine-rich repeat-containing protein 42 (LRRC42) (Homo sapiens (Human)).